Reading from the N-terminus, the 695-residue chain is NADPH--cytochrome P450 reductase (695 aa).

Topologically, residues Met-1–Asp-8 are lumenal. The chain crosses the membrane as a helical span at residues Val-9–Val-31. The Cytoplasmic segment spans residues Ala-32–Ser-695. A Flavodoxin-like domain is found at Cys-66–Trp-221. FMN is bound by residues Ser-72–Ala-77, Ala-123–Gly-126, Leu-169–Asn-178, and Asp-204. The FAD-binding FR-type domain maps to His-277–Pro-538. Arg-296 is a binding site for NADP(+). FAD is bound by residues Arg-451–Ser-454, Thr-469–Val-471, and Gly-486–Thr-489. The disordered stretch occupies residues Gln-497–Gly-516. NADP(+) contacts are provided by residues Thr-552, Ser-614 to Arg-615, Lys-620 to Gln-624, and Glu-656. Trp-694 is an FAD binding site.

The protein belongs to the NADPH--cytochrome P450 reductase family. It in the N-terminal section; belongs to the flavodoxin family. In the C-terminal section; belongs to the flavoprotein pyridine nucleotide cytochrome reductase family. FAD serves as cofactor. It depends on FMN as a cofactor.

Its subcellular location is the endoplasmic reticulum membrane. The protein resides in the mitochondrion outer membrane. The protein localises to the cell membrane. It catalyses the reaction 2 oxidized [cytochrome P450] + NADPH = 2 reduced [cytochrome P450] + NADP(+) + H(+). In terms of biological role, this enzyme is required for electron transfer from NADP to cytochrome P450 in microsomes. It can also provide electron transfer to heme oxygenase and cytochrome B5. Involved in ergosterol biosynthesis. The protein is NADPH--cytochrome P450 reductase of Emericella nidulans (strain FGSC A4 / ATCC 38163 / CBS 112.46 / NRRL 194 / M139) (Aspergillus nidulans).